We begin with the raw amino-acid sequence, 472 residues long: Serine/threonine-protein kinase ULK3 (472 aa).

The 257-residue stretch at 14 to 270 folds into the Protein kinase domain; the sequence is FILTERLGSG…FQDFFAHPWV (257 aa). Residues 20–28 and K44 each bind ATP; that span reads LGSGTYATV. The active-site Proton acceptor is the D137. S176 bears the Phosphoserine mark. The MIT 1 domain maps to 281-347; it reads LAQATALVVE…VSRAEELKAI (67 aa). S350 and S384 each carry phosphoserine; by autocatalysis. Positions 376 to 444 constitute an MIT 2 domain; it reads LLAALEVASA…ARAEYLKEQI (69 aa). S464 carries the phosphoserine modification.

It belongs to the protein kinase superfamily. Ser/Thr protein kinase family. APG1/unc-51/ULK1 subfamily. Interacts (via protein kinase domain) with SUFU. In terms of processing, autophosphorylated. Autophosphorylation is blocked by interaction with SUFU.

It is found in the cytoplasm. It catalyses the reaction L-seryl-[protein] + ATP = O-phospho-L-seryl-[protein] + ADP + H(+). It carries out the reaction L-threonyl-[protein] + ATP = O-phospho-L-threonyl-[protein] + ADP + H(+). Serine/threonine protein kinase that acts as a regulator of Sonic hedgehog (SHH) signaling and autophagy. Acts as a negative regulator of SHH signaling in the absence of SHH ligand: interacts with SUFU, thereby inactivating the protein kinase activity and preventing phosphorylation of GLI proteins (GLI1, GLI2 and/or GLI3). Positively regulates SHH signaling in the presence of SHH: dissociates from SUFU, autophosphorylates and mediates phosphorylation of GLI2, activating it and promoting its nuclear translocation. Phosphorylates in vitro GLI2, as well as GLI1 and GLI3, although less efficiently. Also acts as a regulator of autophagy: following cellular senescence, able to induce autophagy. In Rattus norvegicus (Rat), this protein is Serine/threonine-protein kinase ULK3 (Ulk3).